We begin with the raw amino-acid sequence, 363 residues long: DNA replication and repair protein RecF (363 aa).

30-37 (GDNAQGKT) lines the ATP pocket.

It belongs to the RecF family.

Its subcellular location is the cytoplasm. In terms of biological role, the RecF protein is involved in DNA metabolism; it is required for DNA replication and normal SOS inducibility. RecF binds preferentially to single-stranded, linear DNA. It also seems to bind ATP. This Syntrophotalea carbinolica (strain DSM 2380 / NBRC 103641 / GraBd1) (Pelobacter carbinolicus) protein is DNA replication and repair protein RecF.